The primary structure comprises 315 residues: Ribosomal RNA small subunit methyltransferase H (315 aa).

Residues Gly36 to His38, Asp56, Phe80, Asp102, and Gln109 contribute to the S-adenosyl-L-methionine site.

The protein belongs to the methyltransferase superfamily. RsmH family.

It is found in the cytoplasm. The catalysed reaction is cytidine(1402) in 16S rRNA + S-adenosyl-L-methionine = N(4)-methylcytidine(1402) in 16S rRNA + S-adenosyl-L-homocysteine + H(+). In terms of biological role, specifically methylates the N4 position of cytidine in position 1402 (C1402) of 16S rRNA. The protein is Ribosomal RNA small subunit methyltransferase H of Proteus mirabilis (strain HI4320).